The chain runs to 142 residues: Large ribosomal subunit protein uL11 (142 aa).

The protein belongs to the universal ribosomal protein uL11 family. As to quaternary structure, part of the ribosomal stalk of the 50S ribosomal subunit. Interacts with L10 and the large rRNA to form the base of the stalk. L10 forms an elongated spine to which L12 dimers bind in a sequential fashion forming a multimeric L10(L12)X complex. One or more lysine residues are methylated.

Its function is as follows. Forms part of the ribosomal stalk which helps the ribosome interact with GTP-bound translation factors. The protein is Large ribosomal subunit protein uL11 of Klebsiella pneumoniae (strain 342).